Consider the following 357-residue polypeptide: Serpentine receptor class epsilon-31 (357 aa).

7 consecutive transmembrane segments (helical) span residues 28-48 (VISIFELLSYILCGYILNLSI), 61-81 (LMFLTVPLFAIWYELIIGKFI), 121-141 (LLIFGGFLQWHTIYSIVFGIL), 165-185 (IPIFLIIICQVLAIFMTFIVI), 192-212 (IIARLPFIFLCPISFAVWLFV), 253-273 (LVAVVLVYIMVCFLGIVSLTF), and 283-303 (FVENFLFFHPIPICLTAMFSI).

Belongs to the nematode receptor-like protein sre family.

It localises to the membrane. This is Serpentine receptor class epsilon-31 (sre-31) from Caenorhabditis elegans.